A 449-amino-acid chain; its full sequence is MLKYKGLEGKNVLVVGLAKSGYEAAKLLHHLGANVTVNDGGDLSKDPHAKDLEKMGLKVIGGHHPLSLLDSNPIIVKNPGIPYSVPLISEAEKRGLRILTEVELSYLISEAPIIAVTGTNGKTTVTSLIGDMFDKSRQTGLLSGNIGYVASKVAQEAKPEDYLITELSSFQLLGIEQYRPHIAIITNIYSAHLDYHGTLEEYRNAKRRIYKNQTEDDFLICNYNQRHLIETDGLKSKVYYFSTSQEVDGIYVKDGYIMLNGLRLIHKDDIVLPGEHNLENILAAVLAAVLGGVSIDAVIATLTSFSGIKHRLQYIGSNKTNKYYNDSKATNTLATQFALNSFNQPIIWLCGGLDRGNGFDELIPYMKNVRVMITFGETQDKLTKLGESQGKYVIRATDVKDAVDKVQNVIEPNDVVLLSPACASWDQYNTFEERGDIFIESFRAHLPSK.

Position 118–124 (118–124) interacts with ATP; the sequence is GTNGKTT.

This sequence belongs to the MurCDEF family.

Its subcellular location is the cytoplasm. The enzyme catalyses UDP-N-acetyl-alpha-D-muramoyl-L-alanine + D-glutamate + ATP = UDP-N-acetyl-alpha-D-muramoyl-L-alanyl-D-glutamate + ADP + phosphate + H(+). It functions in the pathway cell wall biogenesis; peptidoglycan biosynthesis. Its function is as follows. Cell wall formation. Catalyzes the addition of glutamate to the nucleotide precursor UDP-N-acetylmuramoyl-L-alanine (UMA). The sequence is that of UDP-N-acetylmuramoylalanine--D-glutamate ligase from Staphylococcus carnosus (strain TM300).